A 168-amino-acid chain; its full sequence is ATP synthase subunit b (168 aa).

A helical membrane pass occupies residues 9-29 (SIPFGTIAYTLFIFLLLLVML).

This sequence belongs to the ATPase B chain family. As to quaternary structure, F-type ATPases have 2 components, F(1) - the catalytic core - and F(0) - the membrane proton channel. F(1) has five subunits: alpha(3), beta(3), gamma(1), delta(1), epsilon(1). F(0) has three main subunits: a(1), b(2) and c(10-14). The alpha and beta chains form an alternating ring which encloses part of the gamma chain. F(1) is attached to F(0) by a central stalk formed by the gamma and epsilon chains, while a peripheral stalk is formed by the delta and b chains.

The protein localises to the cell membrane. Functionally, f(1)F(0) ATP synthase produces ATP from ADP in the presence of a proton or sodium gradient. F-type ATPases consist of two structural domains, F(1) containing the extramembraneous catalytic core and F(0) containing the membrane proton channel, linked together by a central stalk and a peripheral stalk. During catalysis, ATP synthesis in the catalytic domain of F(1) is coupled via a rotary mechanism of the central stalk subunits to proton translocation. Component of the F(0) channel, it forms part of the peripheral stalk, linking F(1) to F(0). In Bacillus cereus (strain B4264), this protein is ATP synthase subunit b.